A 148-amino-acid chain; its full sequence is Troponin C (148 aa).

EF-hand domains lie at 8–43 (KQFNDAHQAFKLHDKKDEGAVSNKELTNLFKSLALH), 44–79 (VSDDKLQQWVDEMDEDATGVIRWEKFKILFERKVQE), 81–116 (EDERELRSAFRVLDKNNQGVIDVEDLRWILKSLGDD), and 117–148 (LNDDEIQDMINETDTDGSGTVDYEEFSALMLG). The Ca(2+) site is built by Asp-130, Asp-132, Ser-134, Thr-136, and Glu-141.

The protein belongs to the troponin C family.

Its function is as follows. Troponin is the central regulatory protein of striated muscle contraction. Tn consists of three components: Tn-I which is the inhibitor of actomyosin ATPase, Tn-T which contains the binding site for tropomyosin and Tn-C. The binding of calcium to Tn-C abolishes the inhibitory action of Tn on actin filaments. The protein is Troponin C of Todarodes pacificus (Japanese flying squid).